Here is a 199-residue protein sequence, read N- to C-terminus: Protein Thf1 (199 aa).

The stretch at 167–198 forms a coiled coil; it reads QYSRVEKDISMYKSNIEKMKQALEIIALNLKT.

The protein belongs to the THF1 family.

In terms of biological role, may be involved in photosynthetic membrane biogenesis. In Prochlorococcus marinus (strain NATL1A), this protein is Protein Thf1.